Here is a 271-residue protein sequence, read N- to C-terminus: Bifunctional protein FolD (271 aa).

NADP(+) contacts are provided by residues 154–156 (GRS), Thr181, and Ile222.

The protein belongs to the tetrahydrofolate dehydrogenase/cyclohydrolase family. Homodimer.

The enzyme catalyses (6R)-5,10-methylene-5,6,7,8-tetrahydrofolate + NADP(+) = (6R)-5,10-methenyltetrahydrofolate + NADPH. It catalyses the reaction (6R)-5,10-methenyltetrahydrofolate + H2O = (6R)-10-formyltetrahydrofolate + H(+). Its pathway is one-carbon metabolism; tetrahydrofolate interconversion. Functionally, catalyzes the oxidation of 5,10-methylenetetrahydrofolate to 5,10-methenyltetrahydrofolate and then the hydrolysis of 5,10-methenyltetrahydrofolate to 10-formyltetrahydrofolate. This chain is Bifunctional protein FolD, found in Thermosipho melanesiensis (strain DSM 12029 / CIP 104789 / BI429).